Consider the following 464-residue polypeptide: Protein FAM90A13 (464 aa).

3 disordered regions span residues Met-1–Leu-42, Val-69–Ala-389, and Ala-411–Pro-437. 2 stretches are compositionally biased toward basic and acidic residues: residues Gly-74–Gly-89 and Asn-97–Arg-114. Residues Leu-180 to Leu-197 show a composition bias toward low complexity.

It belongs to the FAM90 family.

The chain is Protein FAM90A13 from Homo sapiens (Human).